A 169-amino-acid chain; its full sequence is Putative tRNA (cytidine(34)-2'-O)-methyltransferase (169 aa).

I79, G104, I125, and S133 together coordinate S-adenosyl-L-methionine.

Belongs to the class IV-like SAM-binding methyltransferase superfamily. RNA methyltransferase TrmH family. TrmL subfamily.

It localises to the cytoplasm. It catalyses the reaction cytidine(34) in tRNA + S-adenosyl-L-methionine = 2'-O-methylcytidine(34) in tRNA + S-adenosyl-L-homocysteine + H(+). The catalysed reaction is 5-carboxymethylaminomethyluridine(34) in tRNA(Leu) + S-adenosyl-L-methionine = 5-carboxymethylaminomethyl-2'-O-methyluridine(34) in tRNA(Leu) + S-adenosyl-L-homocysteine + H(+). In terms of biological role, could methylate the ribose at the nucleotide 34 wobble position in tRNA. This chain is Putative tRNA (cytidine(34)-2'-O)-methyltransferase, found in Listeria innocua serovar 6a (strain ATCC BAA-680 / CLIP 11262).